The following is a 667-amino-acid chain: Threonine--tRNA ligase (667 aa).

The region spanning 1–64 (MSEAISLTFP…TDGKIEIVTR (64 aa)) is the TGS domain. A catalytic region spans residues 245-553 (DHRRLGREMD…LIENFAGHMP (309 aa)). Zn(2+) contacts are provided by C347, H398, and H530.

Belongs to the class-II aminoacyl-tRNA synthetase family. As to quaternary structure, homodimer. Zn(2+) serves as cofactor.

Its subcellular location is the cytoplasm. It catalyses the reaction tRNA(Thr) + L-threonine + ATP = L-threonyl-tRNA(Thr) + AMP + diphosphate + H(+). In terms of biological role, catalyzes the attachment of threonine to tRNA(Thr) in a two-step reaction: L-threonine is first activated by ATP to form Thr-AMP and then transferred to the acceptor end of tRNA(Thr). Also edits incorrectly charged L-seryl-tRNA(Thr). This chain is Threonine--tRNA ligase, found in Agrobacterium fabrum (strain C58 / ATCC 33970) (Agrobacterium tumefaciens (strain C58)).